A 456-amino-acid chain; its full sequence is Zinc finger C2HC domain-containing protein 1C (456 aa).

2 disordered regions span residues M16–K46 and Y85–P113. Polar residues-rich tracts occupy residues Y35 to K46 and G90 to G102. The stretch at V211–K265 forms a coiled coil. The tract at residues N336 to L388 is disordered. Residues S368 to S382 show a composition bias toward low complexity. The segment at Q387 to S416 adopts a C2HC/C3H-type zinc-finger fold. Residues C391, C394, H406, and C410 each coordinate Zn(2+).

The protein belongs to the ZC2HC1 family. The cofactor is Zn(2+).

The sequence is that of Zinc finger C2HC domain-containing protein 1C (ZC2HC1C) from Homo sapiens (Human).